Consider the following 663-residue polypeptide: Glucans biosynthesis glucosyltransferase H (663 aa).

Helical transmembrane passes span 64–86 (WMLG…DTIA), 101–123 (LAPL…VVLM), 413–435 (LVIG…AGLI), 470–492 (AWAM…ILVL), 558–580 (EAWA…FWFT), and 584–606 (LTAT…LGAH).

The protein belongs to the glycosyltransferase 2 family. OpgH subfamily.

The protein resides in the cell inner membrane. The protein operates within glycan metabolism; osmoregulated periplasmic glucan (OPG) biosynthesis. In terms of biological role, involved in the biosynthesis of osmoregulated periplasmic glucans (OPGs). The chain is Glucans biosynthesis glucosyltransferase H from Caulobacter vibrioides (strain ATCC 19089 / CIP 103742 / CB 15) (Caulobacter crescentus).